The following is a 236-amino-acid chain: VIGGVECNINEHRFLVALYTSRSRRFYCGGTLINQEWVLTAAHCDRKNIRIKLGMHSEKVPNEDAQTRVPKEKFFCLSSKTYTKWDKDIMLMRLKRPVNNSTHIAPVSLPSNPPSVGSVCRVMGWGTITSSQETHPDVPHCANINILDYEVCRAAYPELPVTRRTLCAGILEGGKDSCNGDSGGPLICNGQFQGIAYWGADTCAQPREPGLYTKVFDYTDWIQSIISGNTDATCPQ.

One can recognise a Peptidase S1 domain in the interval 1–227 (VIGGVECNIN…YTDWIQSIIS (227 aa)). The cysteines at positions 28 and 44 are disulfide-linked. Residues His-43 and Asp-88 each act as charge relay system in the active site. N-linked (GlcNAc...) asparagine glycosylation is found at Asn-99 and Asn-100. 3 disulfides stabilise this stretch: Cys-120–Cys-188, Cys-152–Cys-167, and Cys-178–Cys-203. Catalysis depends on Ser-182, which acts as the Charge relay system.

Belongs to the peptidase S1 family. Snake venom subfamily. As to quaternary structure, monomer. As to expression, expressed by the venom gland.

It is found in the secreted. Functionally, snake venom serine protease that may act in the hemostasis system of the prey. The chain is Snake venom serine protease ussurin from Gloydius ussuriensis (Ussuri mamushi).